Reading from the N-terminus, the 334-residue chain is UDP-N-acetylglucosamine--N-acetylmuramyl-(pentapeptide) pyrophosphoryl-undecaprenol N-acetylglucosamine transferase (334 aa).

Residues 11 to 13 (TGG), N125, S185, I229, and Q274 each bind UDP-N-acetyl-alpha-D-glucosamine.

This sequence belongs to the glycosyltransferase 28 family. MurG subfamily.

Its subcellular location is the cell inner membrane. The enzyme catalyses di-trans,octa-cis-undecaprenyl diphospho-N-acetyl-alpha-D-muramoyl-L-alanyl-D-glutamyl-meso-2,6-diaminopimeloyl-D-alanyl-D-alanine + UDP-N-acetyl-alpha-D-glucosamine = di-trans,octa-cis-undecaprenyl diphospho-[N-acetyl-alpha-D-glucosaminyl-(1-&gt;4)]-N-acetyl-alpha-D-muramoyl-L-alanyl-D-glutamyl-meso-2,6-diaminopimeloyl-D-alanyl-D-alanine + UDP + H(+). The protein operates within cell wall biogenesis; peptidoglycan biosynthesis. In terms of biological role, cell wall formation. Catalyzes the transfer of a GlcNAc subunit on undecaprenyl-pyrophosphoryl-MurNAc-pentapeptide (lipid intermediate I) to form undecaprenyl-pyrophosphoryl-MurNAc-(pentapeptide)GlcNAc (lipid intermediate II). This chain is UDP-N-acetylglucosamine--N-acetylmuramyl-(pentapeptide) pyrophosphoryl-undecaprenol N-acetylglucosamine transferase, found in Thermosipho africanus (strain TCF52B).